A 403-amino-acid chain; its full sequence is Aloesone synthase (403 aa).

The active site involves Cys174. Residues Ser281 and 318 to 321 (GGRA) each bind CoA.

The protein belongs to the thiolase-like superfamily. Chalcone/stilbene synthases family. Homodimer.

It participates in secondary metabolite biosynthesis; flavonoid biosynthesis. In terms of biological role, catalyzes the iterative condensations of 6, 7 or 8 molecules of malonyl-CoA to produce various aromatic polyketides. Produces the heptaketide aloesone, the aglycone of aloesin, from 7 molecules of malonyl-CoA as a major product. Also able to produce a hexaketide pyrone, a heptaketide 6-(2-acetyl-3,5-dihydroxybenzyl)-4-hydroxy-2-pyrone, a novel heptaketide 6-(2-(2,4-dihydroxy-6-methylphenyl)-2-oxoethyl)-4-hydroxy-2-pyrone and octaketides SEK4/SEK4b. The sequence is that of Aloesone synthase (PKS3) from Aloe arborescens (Kidachi aloe).